A 206-amino-acid polypeptide reads, in one-letter code: Bacterial microcompartment protein trimer-3 (206 aa).

BMC circularly permuted domains follow at residues 2–104 (ELRA…RLAP) and 105–206 (RVVS…DNRG). A Pore gating residues motif is present at residues 67–68 (ER).

This sequence belongs to the EutL/PduB family. Homotrimerizes to form a pseudohexamer. These stack, with the concave faces together, with the concave faces together, in purified bacterial microcompartments (BMC).

The protein resides in the bacterial microcompartment. Its function is as follows. A minor component of the bacterial microcompartment (BMC) shell. Expression of 5 proteins in E.coli (BMC-H (Hoch_5815), BMC-P (Hoch_5814), and 3 BMC-T (Hoch_5812, Hoch_5816, Hoch_3341)) forms 40 nm artificial BMCs with a molecular mass of 6.5 MDa. One of 2 stacked pseudohexamers in the BMC. There are 20 BMC-T pseudohexamers per BMC, composed of mixed BMC-T1, BMC-T2 and BMC-T3. The shell facets are 20-30 Angstroms thick, with 1 of the stacked BMC-T trimers protruding to the exterior. The stacked trimers may serve as conduits to allow metabolite flux across the protein shell, gated by Arg-68 which contacts Glu-67 in an adjacent subunit; they are flexible enough to play a role in accommodating variations in shell assembly. The polypeptide is Bacterial microcompartment protein trimer-3 (Haliangium ochraceum (strain DSM 14365 / JCM 11303 / SMP-2)).